The chain runs to 418 residues: Nucleoside permease NupG (418 aa).

Residues 1-4 (MNLK) lie on the Cytoplasmic side of the membrane. A helical membrane pass occupies residues 5 to 29 (LQLKILSFLQFCLWGSWLTTLGSYM). At 30–36 (FVTLKFD) the chain is on the periplasmic side. A helical transmembrane segment spans residues 37-58 (GASIGAVYSSLGIAAVFMPALL). Residues 59 to 67 (GIVADKWLS) lie on the Cytoplasmic side of the membrane. Residues 68–88 (AKWVYAICHTIGAITLFMAAQ) form a helical membrane-spanning segment. The Periplasmic portion of the chain corresponds to 89–91 (VTT). A helical transmembrane segment spans residues 92 to 113 (PEAMFLVILINSFAYMPTLGLI). Topologically, residues 114 to 135 (NTISYYRLQNAGMDIVTDFPPI) are cytoplasmic. The helical transmembrane segment at 136-156 (RIWGTIGFIMAMWVVSLSGFE) threads the bilayer. Residues 157–158 (LS) lie on the Periplasmic side of the membrane. A helical membrane pass occupies residues 159 to 178 (HMQLYIGAALSAILVLFTLT). The Cytoplasmic portion of the chain corresponds to 179–209 (LPHIPVAKQQANQSWTTLLGLDAFALFKNKR). A helical transmembrane segment spans residues 210–236 (MAIFFIFSMLLGAELQITNMFGNTFLH). Residues 237–247 (SFDKDPMFASS) are Periplasmic-facing. The chain crosses the membrane as a helical span at residues 248-268 (FIVQHASIIMSISQISETLFI). Over 269–280 (LTIPFFLSRYGI) the chain is Cytoplasmic. A helical membrane pass occupies residues 281–300 (KNVMMISIVAWILRFALFAY). The Periplasmic segment spans residues 301-305 (GDPTP). A helical transmembrane segment spans residues 306-326 (FGTVLLVLSMIVYGCAFDFFN). Topologically, residues 327 to 346 (ISGSVFVEKEVSPAIRASAQ) are cytoplasmic. The helical transmembrane segment at 347–369 (GMFLMMTNGFGCILGGIVSGKVV) threads the bilayer. Residues 370–379 (EMYTQNGITD) are Periplasmic-facing. The helical transmembrane segment at 380–403 (WQTVWLIFAGYSVVLAFAFMAMFK) threads the bilayer. The Cytoplasmic segment spans residues 404–418 (YKHVRVPTGTQTVSH).

The protein belongs to the major facilitator superfamily. Nucleoside:H(+) symporter (NHS) (TC 2.A.1.10) family.

The protein resides in the cell inner membrane. It catalyses the reaction adenosine(in) + H(+)(in) = adenosine(out) + H(+)(out). The enzyme catalyses uridine(in) + H(+)(in) = uridine(out) + H(+)(out). It carries out the reaction thymidine(in) + H(+)(in) = thymidine(out) + H(+)(out). The catalysed reaction is cytidine(in) + H(+)(in) = cytidine(out) + H(+)(out). It catalyses the reaction 2'-deoxycytidine(in) + H(+)(in) = 2'-deoxycytidine(out) + H(+)(out). The enzyme catalyses guanosine(in) + H(+)(in) = guanosine(out) + H(+)(out). It carries out the reaction inosine(in) + H(+)(in) = inosine(out) + H(+)(out). Inhibited by the protonophore uncouplers 2,4-dinitrophenol and carbonyl cyanide m-chlorophenylhydrazone (CCCP), and by valinomycin. Inhibited by the nucleoside antibiotic showdomycin. Broad-specificity transporter of purine and pyrimidine nucleosides. Can transport adenosine, uridine, thymidine, cytidine, deoxycytidine, guanosine and inosine. Can also transport xanthosine, but with a very low affinity. Transport is driven by a proton motive force. The sequence is that of Nucleoside permease NupG from Escherichia coli (strain K12).